The following is a 751-amino-acid chain: Cellulose synthase-like protein G3 (751 aa).

A run of 2 helical transmembrane segments spans residues 47–67 (IYAVFHTCGIIALMYHHVHSL) and 72–92 (TTLITSLLLLSDIVLAFMWAT). Catalysis depends on residues D161 and D466. 6 helical membrane passes run 543-563 (CWAFWSLPLIVYGFLPQLALL), 577-597 (FWLYIVLFLGAYGQDLLDFVL), 617-639 (FSSHLFGFIEFTLKTLNLSTHGF), 674-694 (TVAIVNLLAFVWGLYGLFAWG), 697-717 (LVLELMLASFAVVNCLPIYEA), and 731-751 (VCFVAGILTFVLIVSGYVFLK).

This sequence belongs to the glycosyltransferase 2 family. Plant cellulose synthase-like G subfamily.

It localises to the golgi apparatus membrane. Thought to be a Golgi-localized beta-glycan synthase that polymerize the backbones of noncellulosic polysaccharides (hemicelluloses) of plant cell wall. The chain is Cellulose synthase-like protein G3 (CSLG3) from Arabidopsis thaliana (Mouse-ear cress).